Here is a 462-residue protein sequence, read N- to C-terminus: Cysteine--tRNA ligase (462 aa).

Zn(2+) is bound at residue Cys27. Positions 29–39 match the 'HIGH' region motif; sequence PTVYNYIHVGN. Zn(2+)-binding residues include Cys209, His234, and Glu238. The 'KMSKS' region motif lies at 266–270; sequence KMSKS. Residue Lys269 participates in ATP binding.

This sequence belongs to the class-I aminoacyl-tRNA synthetase family. Monomer. Zn(2+) serves as cofactor.

The protein resides in the cytoplasm. The catalysed reaction is tRNA(Cys) + L-cysteine + ATP = L-cysteinyl-tRNA(Cys) + AMP + diphosphate. The polypeptide is Cysteine--tRNA ligase (Finegoldia magna (strain ATCC 29328 / DSM 20472 / WAL 2508) (Peptostreptococcus magnus)).